Here is a 275-residue protein sequence, read N- to C-terminus: Succinate dehydrogenase [ubiquinone] iron-sulfur subunit, mitochondrial (275 aa).

The transit peptide at 1 to 24 (MFSRRIQVLSPFLKHFVNRNARMM) directs the protein to the mitochondrion. Positions 57–137 (PEVKPKLQKY…PTKIYPLPHC (81 aa)) constitute a 2Fe-2S ferredoxin-type domain. The [2Fe-2S] cluster site is built by C98, C103, C106, and C118. The 4Fe-4S ferredoxin-type domain maps to 178–208 (DRAKLDGLYECILCACCSTSCPSYWWNSEEY). Positions 188, 191, and 194 each coordinate [4Fe-4S] cluster. C198 provides a ligand contact to [3Fe-4S] cluster. W203 is an a ubiquinone binding site. [3Fe-4S] cluster contacts are provided by C245 and C251. C255 provides a ligand contact to [4Fe-4S] cluster.

The protein belongs to the succinate dehydrogenase/fumarate reductase iron-sulfur protein family. Component of complex II composed of four subunits: a flavoprotein (FP), an iron-sulfur protein (IP), and a cytochrome b composed of a large and a small subunit. It depends on [2Fe-2S] cluster as a cofactor. Requires [3Fe-4S] cluster as cofactor. [4Fe-4S] cluster serves as cofactor.

The protein resides in the mitochondrion inner membrane. It carries out the reaction a quinone + succinate = fumarate + a quinol. It participates in carbohydrate metabolism; tricarboxylic acid cycle; fumarate from succinate (eukaryal route): step 1/1. Iron-sulfur protein (IP) subunit of succinate dehydrogenase (SDH) that is involved in complex II of the mitochondrial electron transport chain and is responsible for transferring electrons from succinate to ubiquinone (coenzyme Q). The protein is Succinate dehydrogenase [ubiquinone] iron-sulfur subunit, mitochondrial (sdh2) of Schizosaccharomyces pombe (strain 972 / ATCC 24843) (Fission yeast).